Consider the following 129-residue polypeptide: Protein BEX2 (129 aa).

The disordered stretch occupies residues 1–38; it reads MESKVEQGVKNLNMENDHQEKEEKEEKPQDANKREPVV. Residues 15-36 are compositionally biased toward basic and acidic residues; that stretch reads ENDHQEKEEKEEKPQDANKREP. Arginine 51 carries the omega-N-methylarginine modification. The interval 108–129 is disordered; the sequence is SLRAVSTDPPHHDHHDEFCLMP. Residues 116-129 show a composition bias toward basic and acidic residues; the sequence is PPHHDHHDEFCLMP. The tract at residues 118–122 is his cluster; the sequence is HHDHH. Cysteine 126 contacts Zn(2+).

Belongs to the BEX family. As to quaternary structure, interacts with LMO2, possibly leading to regulate the transcriptional activity of a DNA-binding complex containing LMO2. Interacts with OMP.

The protein localises to the nucleus. The protein resides in the cytoplasm. In terms of biological role, regulator of mitochondrial apoptosis and G1 cell cycle. Regulates the level of PP2A regulatory subunit B and PP2A phosphatase activity. In absence of reductive stress, acts as a pseudosubstrate for the CRL2(FEM1B) complex: associates with FEM1B via zinc, thereby preventing association between FEM1B and its substrates. The protein is Protein BEX2 (Bex2) of Rattus norvegicus (Rat).